We begin with the raw amino-acid sequence, 352 residues long: Small glutamine-rich tetratricopeptide repeat-containing protein 2 (352 aa).

Residues 80–97 (PAAASSSSTAPAAAAATP) show a composition bias toward low complexity. Residues 80–103 (PAAASSSSTAPAAAAATPSDEDLA) form a disordered region. TPR repeat units lie at residues 105-138 (AEQLKAEGNKAMSAKDYGAAIEAYGKAIELNPNS), 140-172 (VYFSNRAAAFSQIGQHDSAIDDAKQASKIDPKF), and 173-206 (GKAYSRLGHALFSSGRYQEAVEAYQKGVEVDPSN). The segment at 217 to 236 (KEQLSSSSSSNANDATASRG) is disordered.

Belongs to the SGT family.

In terms of biological role, co-chaperone that binds to the molecular chaperone Hsp70 and regulates Hsp70 ATPase activity. This Mycosarcoma maydis (Corn smut fungus) protein is Small glutamine-rich tetratricopeptide repeat-containing protein 2.